The sequence spans 161 residues: Phosphopantetheine adenylyltransferase (161 aa).

Ser-10 lines the substrate pocket. ATP-binding positions include Ser-10–Phe-11 and His-18. The substrate site is built by Lys-42, Ala-75, and Arg-89. ATP contacts are provided by residues Gly-90–Arg-92, Glu-100, and Leu-125–Ser-131.

The protein belongs to the bacterial CoaD family. As to quaternary structure, homohexamer. Requires Mg(2+) as cofactor.

It is found in the cytoplasm. The enzyme catalyses (R)-4'-phosphopantetheine + ATP + H(+) = 3'-dephospho-CoA + diphosphate. Its pathway is cofactor biosynthesis; coenzyme A biosynthesis; CoA from (R)-pantothenate: step 4/5. Its function is as follows. Reversibly transfers an adenylyl group from ATP to 4'-phosphopantetheine, yielding dephospho-CoA (dPCoA) and pyrophosphate. This chain is Phosphopantetheine adenylyltransferase, found in Streptococcus agalactiae serotype Ia (strain ATCC 27591 / A909 / CDC SS700).